The sequence spans 288 residues: Nucleotide-binding protein Gura_2968 (288 aa).

8–15 is an ATP binding site; sequence GLSGSGKS. 59–62 is a GTP binding site; sequence DIRG.

It belongs to the RapZ-like family.

In terms of biological role, displays ATPase and GTPase activities. The protein is Nucleotide-binding protein Gura_2968 of Geotalea uraniireducens (strain Rf4) (Geobacter uraniireducens).